The sequence spans 1044 residues: Integrin alpha-V (1044 aa).

Residues 1–30 form the signal peptide; sequence MAAPGRLLLRPRPGGLLLLLPGLLLPLADA. Residues 31–988 are Extracellular-facing; the sequence is FNLDVESPAE…WGIQPAPMPV (958 aa). FG-GAP repeat units follow at residues 32 to 98, 109 to 170, 173 to 225, 237 to 291, 292 to 357, 358 to 415, and 419 to 482; these read NLDV…RRCQ, DYAK…VEYA, RSKN…ISKY, QLAT…GKNM, SSLH…GDFQ, TTKL…GLNS, and QILE…VYPS. Asparagine 74 carries an N-linked (GlcNAc...) asparagine glycan. Intrachain disulfides connect cysteine 89–cysteine 97, cysteine 138–cysteine 158, and cysteine 172–cysteine 185. Residues aspartate 260, asparagine 262, aspartate 264, isoleucine 266, and aspartate 268 each coordinate Ca(2+). 2 N-linked (GlcNAc...) asparagine glycosylation sites follow: asparagine 290 and asparagine 296. Aspartate 314, asparagine 316, aspartate 318, tyrosine 320, aspartate 322, aspartate 379, aspartate 381, aspartate 383, phenylalanine 385, aspartate 387, aspartate 443, aspartate 445, asparagine 447, tyrosine 449, and aspartate 451 together coordinate Ca(2+). Cystine bridges form between cysteine 491/cysteine 502 and cysteine 508/cysteine 565. An N-linked (GlcNAc...) asparagine glycan is attached at asparagine 615. Cystine bridges form between cysteine 626/cysteine 632 and cysteine 698/cysteine 711. Residues asparagine 704, asparagine 835, asparagine 851, and asparagine 869 are each glycosylated (N-linked (GlcNAc...) asparagine). Cystine bridges form between cysteine 852/cysteine 910 and cysteine 900/cysteine 905. Asparagine 941, asparagine 969, and asparagine 976 each carry an N-linked (GlcNAc...) asparagine glycan. The helical transmembrane segment at 989–1012 threads the bilayer; sequence PVWVIILAVLAGLLLLAVLVFVMY. At 1013-1044 the chain is on the cytoplasmic side; sequence RMGFFKRVRPPQEEQEREQLQPHENGEGNSET. Positions 1015 to 1019 match the GFFKR motif motif; it reads GFFKR. Over residues 1023–1038 the composition is skewed to basic and acidic residues; sequence PQEEQEREQLQPHENG. Residues 1023–1044 are disordered; it reads PQEEQEREQLQPHENGEGNSET.

This sequence belongs to the integrin alpha chain family. As to quaternary structure, heterodimer of an alpha and a beta subunit. The alpha subunit is composed of a heavy and a light chain linked by a disulfide bond. Alpha-V (ITGAV) associates with either beta-1 (ITGB1), beta-3 (ITGB3), beta-5 (ITGB5), beta-6 (ITGB6) or beta-8 (ITGB8). Interacts with RAB25. Interacts with CIB1. Integrins ITGAV:ITGB3 and ITGAV:ITGB5 interact with FBLN5 (via N-terminus). ITGAV:ITGB3 and ITGAV:ITGB5 interact with CCN3. ITGAV:ITGB3 interacts with ADGRA2. ITGAV:ITGB3 interacts with FGF2; it is likely that FGF2 can simultaneously bind ITGAV:ITGB3 and FGF receptors. ITGAV:ITGB3 interacts with SELP (via C-type lectin domain); the interaction mediates cell-cell interaction and adhesion. ITGAV:ITGB3 is found in a ternary complex with CX3CR1 and CX3CL1. ITGAV:ITGB3 is found in a ternary complex with NRG1 and ERBB3. ITGAV:ITGB3 is found in a ternary complex with FGF1 and FGFR1. ITGAV:ITGB3 is found in a ternary complex with IGF1 and IGF1R. ITGAV:ITGB3 interacts with IGF2. ITGAV:ITGB3 and ITGAV:ITGB6 interact with FBN1. ITGAV:ITGB3 interacts with CD9, CD81 and CD151 (via second extracellular domain). ITGAV:ITGB6 interacts with TGFB1. ITGAV:ITGB3 interacts with PTN. Forms a complex with PTPRZ1 and PTN that stimulates endothelial cell migration through ITGB3 'Tyr-773' phosphorylation. Interacts with TM4SF19.

It localises to the cell membrane. The protein localises to the cell junction. The protein resides in the focal adhesion. In terms of biological role, the alpha-V (ITGAV) integrins are receptors for vitronectin, cytotactin, fibronectin, fibrinogen, laminin, matrix metalloproteinase-2, osteopontin, osteomodulin, prothrombin, thrombospondin, TGFB1 and vWF. They recognize the sequence R-G-D in a wide array of ligands. Alpha-V integrins may play a role in embryo implantation, angiogenesis and wound healing. ITGAV:ITGB3 binds to fractalkine (CX3CL1) and may act as its coreceptor in CX3CR1-dependent fractalkine signaling. ITGAV:ITGB3 binds to NRG1 (via EGF domain) and this binding is essential for NRG1-ERBB signaling. ITGAV:ITGB3 binds to FGF1 and this binding is essential for FGF1 signaling. ITGAV:ITGB3 binds to FGF2 and this binding is essential for FGF2 signaling. ITGAV:ITGB3 binds to IGF1 and this binding is essential for IGF1 signaling. ITGAV:ITGB3 binds to IGF2 and this binding is essential for IGF2 signaling. ITGAV:ITGB3 binds to IL1B and this binding is essential for IL1B signaling. ITGAV:ITGB3 binds to PLA2G2A via a site (site 2) which is distinct from the classical ligand-binding site (site 1) and this induces integrin conformational changes and enhanced ligand binding to site 1. ITGAV:ITGB3 and ITGAV:ITGB6 act as a receptor for fibrillin-1 (FBN1) and mediate R-G-D-dependent cell adhesion to FBN1. Integrin alpha-V/beta-6 or alpha-V/beta-8 (ITGAV:ITGB6 or ITGAV:ITGB8) mediates R-G-D-dependent release of transforming growth factor beta-1 (TGF-beta-1) from regulatory Latency-associated peptide (LAP), thereby playing a key role in TGF-beta-1 activation. ITGAV:ITGB3 acts as a receptor for CD40LG. ITGAV:ITGB3 binds to the Lilrb4a/Gp49b receptor and enhances the Lilrb4a-mediated inhibition of mast cell activation. ITGAV:ITGB3 also suppresses marginal zone B cell antibody production through its interaction with Lilrb4a. ITGAV:ITGB3 acts as a receptor for IBSP and promotes cell adhesion and migration to IBSP. This chain is Integrin alpha-V (Itgav), found in Mus musculus (Mouse).